Consider the following 257-residue polypeptide: High affinity immunoglobulin epsilon receptor subunit alpha (257 aa).

Residues 1-25 form the signal peptide; that stretch reads MAPAMESPTLLCVALLFFAPDGVLA. Topologically, residues 26-205 are extracellular; it reads VPQKPKVSLN…KAPREKYWLQ (180 aa). 2 consecutive Ig-like domains span residues 30–110 and 111–193; these read PKVS…EVFS and DWLL…LNIT. 7 N-linked (GlcNAc...) asparagine glycosylation sites follow: N46, N67, N75, N99, N160, N165, and N191. Residues C51 and C93 are joined by a disulfide bond. C132 and C176 are joined by a disulfide. The helical transmembrane segment at 206–224 threads the bilayer; the sequence is FFIPLLVVILFAVDTGLFI. The Cytoplasmic segment spans residues 225 to 257; sequence STQQQVTFLLKIKRTRKGFRLLNPHPKPNPKNN.

Tetramer of an alpha chain, a beta chain, and two disulfide linked gamma chains. Interacts with IGHE (via CH3 region). As to expression, expressed in eosinophils.

The protein localises to the cell membrane. High-affinity receptor for immunoglobulin epsilon/IgE. Mediates IgE effector functions in myeloid cells. Upon IgE binding and antigen/allergen cross-linking initiates signaling pathways that lead to myeloid cell activation and differentiation. On mast cells, basophils and eosinophils stimulates the secretion of vasoactive amines, lipid mediators and cytokines that contribute to inflammatory response, tissue remodeling and cytotoxicity against microbes. Triggers the immediate hypersensitivity response to allergens as a host defense mechanism against helminth parasites, pathogenic bacteria and venom toxicity. When dysregulated, it can elicit harmful life-threatening allergic and anaphylactic reactions. The chain is High affinity immunoglobulin epsilon receptor subunit alpha (FCER1A) from Homo sapiens (Human).